Reading from the N-terminus, the 735-residue chain is FHF complex subunit HOOK-interacting protein 2B (735 aa).

The tract at residues 183 to 229 (SSSTSDEAAEKDCSGSSSPERASSPSSSSSACSLLSRSGAHPVSSPQ) is disordered. Low complexity predominate over residues 196–221 (SGSSSPERASSPSSSSSACSLLSRSG).

It belongs to the FHIP family.

In Danio rerio (Zebrafish), this protein is FHF complex subunit HOOK-interacting protein 2B (fhip2b).